We begin with the raw amino-acid sequence, 317 residues long: Ribosomal protein L11 methyltransferase (317 aa).

Positions 158, 179, 201, and 244 each coordinate S-adenosyl-L-methionine.

This sequence belongs to the methyltransferase superfamily. PrmA family.

Its subcellular location is the cytoplasm. The enzyme catalyses L-lysyl-[protein] + 3 S-adenosyl-L-methionine = N(6),N(6),N(6)-trimethyl-L-lysyl-[protein] + 3 S-adenosyl-L-homocysteine + 3 H(+). Its function is as follows. Methylates ribosomal protein L11. The chain is Ribosomal protein L11 methyltransferase from Streptococcus thermophilus (strain CNRZ 1066).